Reading from the N-terminus, the 149-residue chain is Chromophore lyase CpcS/CpeS homolog (149 aa).

The protein belongs to the CpcS/CpeS biliprotein lyase family.

The protein resides in the plastid. It localises to the chloroplast. Functionally, might function to covalently attach a chromophore to Cys residue(s) of phycobiliproteins. The sequence is that of Chromophore lyase CpcS/CpeS homolog from Porphyra purpurea (Red seaweed).